The sequence spans 315 residues: BTB/POZ domain-containing adapter for CUL3-mediated RhoA degradation protein 3 (315 aa).

An N-acetylmethionine modification is found at Met1. Ser23 carries the post-translational modification Phosphoserine. The BTB domain occupies 32 to 100 (KYVKLNVGGA…LRDGAVPLPE (69 aa)). Positions 239-245 (QTKVEFP) match the Interaction with PCNA motif. The segment at 269–294 (NALLEATGGAAGRSHHLDEDEERERE) is disordered.

This sequence belongs to the BACURD family. As to quaternary structure, homotetramer; forms a two-fold symmetric tetramer in solution. Interacts with CUL3; interaction is direct and forms a 5:5 heterodecamer. Component of the BCR(BACURD3) E3 ubiquitin ligase complex, at least composed of CUL3, KCTD10/BACURD3 and RBX1. Interacts with DNA polymerase delta subunit 2/POLD2. Interacts with PCNA. As to expression, expressed at highest levels in lung. Also detected in testis and heart. Very low expression, if any, in brain, liver, spleen, kidney and skeletal muscle.

Its subcellular location is the nucleus. It functions in the pathway protein modification; protein ubiquitination. Substrate-specific adapter of a BCR (BTB-CUL3-RBX1) E3 ubiquitin-protein ligase complex. The BCR(BACURD3) E3 ubiquitin ligase complex mediates the ubiquitination of target proteins, leading to their degradation by the proteasome. The polypeptide is BTB/POZ domain-containing adapter for CUL3-mediated RhoA degradation protein 3 (Kctd10) (Rattus norvegicus (Rat)).